Consider the following 468-residue polypeptide: Monogalactosyldiacylglycerol synthase 2, chloroplastic (468 aa).

UDP-binding positions include His82, Arg251, 361–365, and Glu383; that span reads GTIAE.

This sequence belongs to the glycosyltransferase 28 family. As to expression, expressed mainly in floral buds. Detected in roots, leaves, stems, siliques and pollen tubes.

The protein localises to the plastid. It is found in the chloroplast outer membrane. It carries out the reaction a 1,2-diacyl-sn-glycerol + UDP-alpha-D-galactose = a 1,2-diacyl-3-O-(beta-D-galactosyl)-sn-glycerol + UDP + H(+). The enzyme catalyses 1,2-di-(9Z,12Z-octadecadienoyl)-sn-glycerol + UDP-alpha-D-galactose = 1,2-di-(9Z,12Z-octadecadienoyl)-3-beta-D-galactosyl-sn-glycerol + UDP + H(+). The catalysed reaction is 1-(9Z-octadecenoyl)-2-hexadecanoyl-sn-glycerol + UDP-alpha-D-galactose = 1-(9Z-octadecenoyl)-2-hexadecanoyl-3-beta-D-galactosyl-sn-glycerol + UDP + H(+). It catalyses the reaction 1,2-di-(9Z-octadecenoyl)-sn-glycerol + UDP-alpha-D-galactose = 1,2-di-(9Z-octadecenoyl)-3-beta-D-galactosyl-sn-glycerol + UDP + H(+). Inhibited by galvestine-1. In terms of biological role, involved in the synthesis of monogalactosyldiacylglycerol, the major structural component of photosynthetic membranes and in the chloroplast envelope biogenesis. Can use both prokaryotic (18:1/16:0) or eukaryotic (18:2/18:2) 1,2-diacylglycerol species, but operates with some preference for the eukaryotic one. Plays a minor role in galactolipid synthesis in chloroplasts. Is required for membrane lipid remodeling in phosphate-starved roots. Acts as the minor factor involved in digalactosyldiacylglycerol (DGDG) biosynthesis in phosphate-starved roots. Does not seem to be required for plant growth under nutrient-sufficient conditions. Required for membrane lipid remodeling in plants grown in acidic conditions. The chain is Monogalactosyldiacylglycerol synthase 2, chloroplastic from Arabidopsis thaliana (Mouse-ear cress).